The sequence spans 148 residues: 3-dehydroquinate dehydratase (148 aa).

Tyr23 serves as the catalytic Proton acceptor. The substrate site is built by Asn75, His81, and Asp88. His101 acts as the Proton donor in catalysis. Substrate contacts are provided by residues Leu102–Ser103 and Arg112.

Belongs to the type-II 3-dehydroquinase family. In terms of assembly, homododecamer.

The catalysed reaction is 3-dehydroquinate = 3-dehydroshikimate + H2O. The protein operates within metabolic intermediate biosynthesis; chorismate biosynthesis; chorismate from D-erythrose 4-phosphate and phosphoenolpyruvate: step 3/7. Functionally, catalyzes a trans-dehydration via an enolate intermediate. The sequence is that of 3-dehydroquinate dehydratase from Ectopseudomonas mendocina (strain ymp) (Pseudomonas mendocina).